A 185-amino-acid chain; its full sequence is Large ribosomal subunit protein uL22 (185 aa).

The tract at residues alanine 158–glutamate 185 is disordered. Over residues lysine 167 to alanine 176 the composition is skewed to basic residues.

Belongs to the universal ribosomal protein uL22 family.

The protein is Large ribosomal subunit protein uL22 (RpL17) of Diaphorina citri (Asian citrus psyllid).